The primary structure comprises 225 residues: Cytidylate kinase (225 aa).

11-19 (GPAAAGKST) contributes to the ATP binding site.

This sequence belongs to the cytidylate kinase family. Type 1 subfamily.

The protein resides in the cytoplasm. It catalyses the reaction CMP + ATP = CDP + ADP. It carries out the reaction dCMP + ATP = dCDP + ADP. This chain is Cytidylate kinase, found in Bacillus cereus (strain ATCC 10987 / NRS 248).